Consider the following 237-residue polypeptide: Ribosomal RNA small subunit methyltransferase G (237 aa).

S-adenosyl-L-methionine is bound by residues glycine 72, leucine 77, 123–124 (AE), and arginine 138. The interval 210–237 (TALETGTKAAPSRSPRKPGGRKKRGRKR) is disordered. Residues 223 to 237 (SPRKPGGRKKRGRKR) show a composition bias toward basic residues.

Belongs to the methyltransferase superfamily. RNA methyltransferase RsmG family.

Its subcellular location is the cytoplasm. Its function is as follows. Specifically methylates the N7 position of guanine in position 518 of 16S rRNA. This chain is Ribosomal RNA small subunit methyltransferase G, found in Thermobifida fusca (strain YX).